The following is a 946-amino-acid chain: Inter-alpha-trypsin inhibitor heavy chain H2 (946 aa).

The N-terminal stretch at 1 to 18 (MQRLACVLIWLFLLEEQA) is a signal peptide. Residues 19 to 54 (FEIPANEYSEFAGYSNLVELAPDKFPFVQENRRYQR) constitute a propeptide that is removed on maturation. The region spanning 56 to 185 (LPEESGEMTD…KVQFELHYQE (130 aa)) is the VIT domain. Ser60 is subject to Phosphoserine. N-linked (GlcNAc...) asparagine glycans are attached at residues Asn118 and Asn263. 2 positions are modified to 4-carboxyglutamate: Glu282 and Glu283. Positions 308–468 (PKNILFVIDV…YDFLKRLSNE (161 aa)) constitute a VWFA domain. N-linked (GlcNAc...) asparagine glycosylation is present at Asn445. Ser466 carries the phosphoserine modification. N-linked (GlcNAc...) asparagine glycosylation occurs at Asn578. The residue at position 702 (Asp702) is an Aspartate 1-(chondroitin 4-sulfate)-ester. Positions 703–946 (PHFIIYLPKS…PQLYSFLKRP (244 aa)) are excised as a propeptide. At Ser886 the chain carries Phosphoserine.

The protein belongs to the ITIH family. I-alpha-I plasma protease inhibitors are assembled from one or two heavy chains (HC) and one light chain, bikunin. Inter-alpha-inhibitor (I-alpha-I) is composed of ITIH1/HC1, ITIH2/HC2 and bikunin. Post-translationally, heavy chains are linked to bikunin via chondroitin 4-sulfate esterified to the alpha-carboxyl of the C-terminal aspartate after propeptide cleavage. In terms of processing, phosphorylated by FAM20C in the extracellular medium.

It is found in the secreted. Its function is as follows. May act as a carrier of hyaluronan in serum or as a binding protein between hyaluronan and other matrix protein, including those on cell surfaces in tissues to regulate the localization, synthesis and degradation of hyaluronan which are essential to cells undergoing biological processes. This Mesocricetus auratus (Golden hamster) protein is Inter-alpha-trypsin inhibitor heavy chain H2 (ITIH2).